Consider the following 88-residue polypeptide: Large ribosomal subunit protein bL31B (88 aa).

It belongs to the bacterial ribosomal protein bL31 family. Type B subfamily. As to quaternary structure, part of the 50S ribosomal subunit.

This chain is Large ribosomal subunit protein bL31B, found in Bordetella bronchiseptica (strain ATCC BAA-588 / NCTC 13252 / RB50) (Alcaligenes bronchisepticus).